The following is a 182-amino-acid chain: Large ribosomal subunit protein uL6 (182 aa).

This sequence belongs to the universal ribosomal protein uL6 family. Part of the 50S ribosomal subunit.

This protein binds to the 23S rRNA, and is important in its secondary structure. It is located near the subunit interface in the base of the L7/L12 stalk, and near the tRNA binding site of the peptidyltransferase center. The sequence is that of Large ribosomal subunit protein uL6 from Dehalococcoides mccartyi (strain ATCC BAA-2100 / JCM 16839 / KCTC 5957 / BAV1).